The chain runs to 182 residues: NADH-quinone oxidoreductase subunit B 1 (182 aa).

Positions 47, 48, 113, and 142 each coordinate [4Fe-4S] cluster.

Belongs to the complex I 20 kDa subunit family. NDH-1 is composed of 14 different subunits. Subunits NuoB, C, D, E, F, and G constitute the peripheral sector of the complex. Requires [4Fe-4S] cluster as cofactor.

The protein resides in the cell inner membrane. It catalyses the reaction a quinone + NADH + 5 H(+)(in) = a quinol + NAD(+) + 4 H(+)(out). Its function is as follows. NDH-1 shuttles electrons from NADH, via FMN and iron-sulfur (Fe-S) centers, to quinones in the respiratory chain. Couples the redox reaction to proton translocation (for every two electrons transferred, four hydrogen ions are translocated across the cytoplasmic membrane), and thus conserves the redox energy in a proton gradient. The sequence is that of NADH-quinone oxidoreductase subunit B 1 from Anaeromyxobacter dehalogenans (strain 2CP-C).